A 479-amino-acid polypeptide reads, in one-letter code: MLPESLVEYVREVGSGGTTCEEFTAGAIERTKKQGLDAYITLNEKALDEARRIDSRIKKGEKVGRCLGAPIAVKDNICVRGMRTTCASKMLEGYESPYDATVVTRLLAEDAIITGKTNMDEFAMGLTTEFSAYGPSRNPWNKECTPGGSSGGSAAAVGGLECIASLGSDTGGSVRNPASFCGMVGFKPTYGLVSRYGLVSYANSIEQIGPITRTVEDAAFMMDVISGADPNDATTIECKGGFLDGIDAGIKGKKVGLITEMAGEGIDPRVAEATRDAMAALEDAGARCGKVSLDMVKYSVAAYYTITATEAASNLARYDNTMYGYDMPIESYEFHSYISKARRKFGPEVTRRMILGGFVSSSGHGGRYYHRALKVRGLLAREAEEALAEYDLLLSPTVPILPFKLGEKMGDPVGLFLVDYNTVTANLTGKPAASVPYTVCDGLPVGMQLMGRPSGDAEVLQAAYSLQERSRMPEAPPWQ.

Catalysis depends on charge relay system residues Lys-74 and Ser-149. The active-site Acyl-ester intermediate is Ser-173.

Belongs to the amidase family. GatA subfamily. As to quaternary structure, heterotrimer of A, B and C subunits.

It catalyses the reaction L-glutamyl-tRNA(Gln) + L-glutamine + ATP + H2O = L-glutaminyl-tRNA(Gln) + L-glutamate + ADP + phosphate + H(+). Its function is as follows. Allows the formation of correctly charged Gln-tRNA(Gln) through the transamidation of misacylated Glu-tRNA(Gln) in organisms which lack glutaminyl-tRNA synthetase. The reaction takes place in the presence of glutamine and ATP through an activated gamma-phospho-Glu-tRNA(Gln). The chain is Glutamyl-tRNA(Gln) amidotransferase subunit A from Cenarchaeum symbiosum (strain A).